Reading from the N-terminus, the 1302-residue chain is Phosphoribosylformylglycinamidine synthase (1302 aa).

ATP is bound by residues 307–318 and alanine 678; that span reads GASTGSGGEIRD. Glutamate 718, asparagine 722, and aspartate 891 together coordinate Mg(2+). One can recognise a Glutamine amidotransferase type-1 domain in the interval 1049–1302; the sequence is MAILREQGVN…MFQNARKNIG (254 aa). Catalysis depends on cysteine 1142, which acts as the Nucleophile. Catalysis depends on residues histidine 1267 and glutamate 1269.

The protein in the N-terminal section; belongs to the FGAMS family. In terms of assembly, monomer.

It is found in the cytoplasm. It catalyses the reaction N(2)-formyl-N(1)-(5-phospho-beta-D-ribosyl)glycinamide + L-glutamine + ATP + H2O = 2-formamido-N(1)-(5-O-phospho-beta-D-ribosyl)acetamidine + L-glutamate + ADP + phosphate + H(+). It participates in purine metabolism; IMP biosynthesis via de novo pathway; 5-amino-1-(5-phospho-D-ribosyl)imidazole from N(2)-formyl-N(1)-(5-phospho-D-ribosyl)glycinamide: step 1/2. Phosphoribosylformylglycinamidine synthase involved in the purines biosynthetic pathway. Catalyzes the ATP-dependent conversion of formylglycinamide ribonucleotide (FGAR) and glutamine to yield formylglycinamidine ribonucleotide (FGAM) and glutamate. The chain is Phosphoribosylformylglycinamidine synthase from Vibrio parahaemolyticus serotype O3:K6 (strain RIMD 2210633).